We begin with the raw amino-acid sequence, 630 residues long: Chaperone protein HtpG (630 aa).

Residues 1–327 form an a; substrate-binding region; sequence MSVETYKFDA…SEDLSLNISR (327 aa). The b stretch occupies residues 328–551; sequence ETLQHSPLID…EGSMDIRTER (224 aa). A compositionally biased stretch (basic and acidic residues) spans 483–499; the sequence is TKTAKSSDTNNDGKDDT. Positions 483-504 are disordered; sequence TKTAKSSDTNNDGKDDTSSSDD. The tract at residues 552-630 is c; that stretch reads FLIEQKQLSS…INFFIEKSVN (79 aa).

It belongs to the heat shock protein 90 family. Homodimer.

It localises to the cytoplasm. Its function is as follows. Molecular chaperone. Has ATPase activity. The polypeptide is Chaperone protein HtpG (Orientia tsutsugamushi (strain Boryong) (Rickettsia tsutsugamushi)).